A 219-amino-acid polypeptide reads, in one-letter code: uncharacterized protein (219 aa).

D58 is a catalytic residue.

The protein belongs to the pseudouridine synthase RluA family.

The enzyme catalyses a uridine in RNA = a pseudouridine in RNA. This is an uncharacterized protein from Zymomonas mobilis subsp. mobilis (strain ATCC 31821 / ZM4 / CP4).